The sequence spans 340 residues: tRNA (cytosine(34)-C(5))-methyltransferase, mitochondrial (340 aa).

S-adenosyl-L-methionine-binding positions include 139–145, glutamate 162, aspartate 193, and aspartate 211; that span reads CAAPGGK. The active-site Nucleophile is cysteine 265.

Belongs to the class I-like SAM-binding methyltransferase superfamily. RsmB/NOP family.

Its subcellular location is the mitochondrion matrix. The enzyme catalyses cytidine(34) in mitochondrial tRNA + S-adenosyl-L-methionine = 5-methylcytidine(34) in mitochondrial tRNA + S-adenosyl-L-homocysteine + H(+). Its function is as follows. Mitochondrial tRNA methyltransferase that mediates methylation of cytosine to 5-methylcytosine (m5C) at position 34 of mt-tRNA(Met). mt-tRNA(Met) methylation at cytosine(34) takes place at the wobble position of the anticodon and initiates the formation of 5-formylcytosine (f(5)c) at this position. mt-tRNA(Met) containing the f(5)c modification at the wobble position enables recognition of the AUA codon in addition to the AUG codon, expanding codon recognition in mitochondrial translation. This is tRNA (cytosine(34)-C(5))-methyltransferase, mitochondrial from Homo sapiens (Human).